The primary structure comprises 299 residues: CRISPR system Cms protein Csm4 (299 aa).

The protein belongs to the CRISPR-associated Csm4 family. In terms of assembly, part of the Csm effector complex that includes at least Cas10(1), Csm2(3), Csm3(5), Csm4(1), Csm5(1) and mature crRNA. The Csm complex is elongated and slightly twisted with a maximal length of 215 Angstroms and a diameter of 75-80 Angstroms. It has been modeled to have a central protein filamant of Csm3 subunits along which the dsRNA helix of paired crRNA and target RNA binds. The filament is capped at one end by Cas10 and Csm4 and at the other end by Csm5; ssDNA is thought to bind to the N-terminal HD domain of Cas10. Csm with a precursor crRNA does not include Csm5, while Cas6, the enzyme probably involved in pre-crRNA processing, is found associated with a subset of the Csm complex.

In terms of biological role, CRISPR (clustered regularly interspaced short palindromic repeat) is an adaptive immune system that provides protection against mobile genetic elements (viruses, transposable elements and conjugative plasmids). CRISPR clusters contain spacers, sequences complementary to antecedent mobile elements, and target invading nucleic acids. CRISPR clusters are transcribed and processed into CRISPR RNA (crRNA). The type III-A Csm effector complex binds crRNA and acts as a crRNA-guided RNase, DNase and cyclic oligoadenylate synthase; binding of target RNA cognate to the crRNA is required for all activities. In a heterologous host this Csm effector complex restricts ssRNA phage MS2, suggesting it may target RNA viruses in vivo. Its function is as follows. Csm functions as a non-specific ssDNase. Base-pairing between crRNA and target RNA to form a ternary Csm complex activates a ssDNase activity; target RNA cleavage suppresses the ssDNase, a temporal control that prevents uncontrolled DNA degradation. Viral RNA transcripts probably tether the Csm complex to the viral genome, recruiting Cas10 ssDNA activity which is able to degrade DNA in the transcription bubble, spatially controlling the DNase activity. Functionally, the subunit probably binds to the 5' handle of the crRNA, helping in discrimination between self- and non-self. This chain is CRISPR system Cms protein Csm4, found in Streptococcus thermophilus.